The sequence spans 712 residues: Ribosomal RNA large subunit methyltransferase K/L (712 aa).

The 112-residue stretch at 42–153 (QALRIVMWSR…KGRASLSIDL (112 aa)) folds into the THUMP domain.

The protein belongs to the methyltransferase superfamily. RlmKL family.

Its subcellular location is the cytoplasm. It catalyses the reaction guanosine(2445) in 23S rRNA + S-adenosyl-L-methionine = N(2)-methylguanosine(2445) in 23S rRNA + S-adenosyl-L-homocysteine + H(+). The catalysed reaction is guanosine(2069) in 23S rRNA + S-adenosyl-L-methionine = N(2)-methylguanosine(2069) in 23S rRNA + S-adenosyl-L-homocysteine + H(+). Functionally, specifically methylates the guanine in position 2445 (m2G2445) and the guanine in position 2069 (m7G2069) of 23S rRNA. This is Ribosomal RNA large subunit methyltransferase K/L from Stenotrophomonas maltophilia (strain R551-3).